A 138-amino-acid polypeptide reads, in one-letter code: Acidic phospholipase A2 Tbo-E6 (138 aa).

The signal sequence occupies residues 1 to 16 (MRTLWILAVLLLGVKG). Cystine bridges form between C42-C131, C44-C60, C59-C111, C65-C138, C66-C104, C73-C97, and C91-C102. Positions 43, 45, and 47 each coordinate Ca(2+). H63 is an active-site residue. D64 is a binding site for Ca(2+). Residue D105 is part of the active site.

In terms of assembly, monomer. Ca(2+) serves as cofactor. As to expression, expressed by the venom gland.

The protein localises to the secreted. It carries out the reaction a 1,2-diacyl-sn-glycero-3-phosphocholine + H2O = a 1-acyl-sn-glycero-3-phosphocholine + a fatty acid + H(+). Its function is as follows. Snake venom phospholipase A2 (PLA2) that impairs hemostasis. It weakly inhibits ADP-induced platelet aggregation when tested on platelet rich plasma from human and rabbit blood (15-25% of inhibition at 5-10 ug of enzyme), and dose-dependently inhibits blood coagulation, possibly by inhibiting thrombin activation. Exhibits high hydrolytic activities toward L-dipalmitoyl phosphatidylcholine. PLA2 catalyzes the calcium-dependent hydrolysis of the 2-acyl groups in 3-sn-phosphoglycerides. The polypeptide is Acidic phospholipase A2 Tbo-E6 (Craspedocephalus borneensis (Borneo pit viper)).